The following is a 204-amino-acid chain: Protein GET1 (204 aa).

Over 1–4 (MPSL) the chain is Lumenal. The helical transmembrane segment at 5–24 (LLIIFVTELVVQLVNTLGAT) threads the bilayer. Topologically, residues 25–110 (TINDLLWRIY…KFDRTLTTTR (86 aa)) are cytoplasmic. The stretch at 72–107 (AKWAKLRRQHDKLLEDLEKKKASLEAARTKFDRTLT) forms a coiled coil. A helical transmembrane segment spans residues 111 to 131 (TVSTRSVQWFLPFWYSKEPMF). Over 132-155 (WLPYGWFPYYVEWFASFPRAPMGS) the chain is Lumenal. Residues 156–172 (VSIVVWQWACTAVIALM) form a helical membrane-spanning segment. The Cytoplasmic portion of the chain corresponds to 173-204 (IEAATAALVYVAAKQSQKIRQPVPAQSEKKDS).

It belongs to the WRB/GET1 family. In terms of assembly, interacts with GET3.

It localises to the endoplasmic reticulum membrane. Functionally, required for the post-translational delivery of tail-anchored (TA) proteins to the endoplasmic reticulum. Acts as a membrane receptor for soluble GET3, which recognizes and selectively binds the transmembrane domain of TA proteins in the cytosol. In Podospora anserina (strain S / ATCC MYA-4624 / DSM 980 / FGSC 10383) (Pleurage anserina), this protein is Protein GET1.